The sequence spans 241 residues: Ribonuclease PH (241 aa).

Phosphate contacts are provided by residues arginine 87 and 125 to 127 (GTR).

Belongs to the RNase PH family. In terms of assembly, homohexameric ring arranged as a trimer of dimers.

The catalysed reaction is tRNA(n+1) + phosphate = tRNA(n) + a ribonucleoside 5'-diphosphate. In terms of biological role, phosphorolytic 3'-5' exoribonuclease that plays an important role in tRNA 3'-end maturation. Removes nucleotide residues following the 3'-CCA terminus of tRNAs; can also add nucleotides to the ends of RNA molecules by using nucleoside diphosphates as substrates, but this may not be physiologically important. Probably plays a role in initiation of 16S rRNA degradation (leading to ribosome degradation) during starvation. The protein is Ribonuclease PH of Dehalococcoides mccartyi (strain ATCC BAA-2100 / JCM 16839 / KCTC 5957 / BAV1).